The chain runs to 499 residues: Bifunctional purine biosynthesis protein PurH (499 aa).

The region spanning 1–144 (MINRALISVY…KNFKDVIVVT (144 aa)) is the MGS-like domain.

Belongs to the PurH family.

The catalysed reaction is (6R)-10-formyltetrahydrofolate + 5-amino-1-(5-phospho-beta-D-ribosyl)imidazole-4-carboxamide = 5-formamido-1-(5-phospho-D-ribosyl)imidazole-4-carboxamide + (6S)-5,6,7,8-tetrahydrofolate. It catalyses the reaction IMP + H2O = 5-formamido-1-(5-phospho-D-ribosyl)imidazole-4-carboxamide. It participates in purine metabolism; IMP biosynthesis via de novo pathway; 5-formamido-1-(5-phospho-D-ribosyl)imidazole-4-carboxamide from 5-amino-1-(5-phospho-D-ribosyl)imidazole-4-carboxamide (10-formyl THF route): step 1/1. The protein operates within purine metabolism; IMP biosynthesis via de novo pathway; IMP from 5-formamido-1-(5-phospho-D-ribosyl)imidazole-4-carboxamide: step 1/1. The chain is Bifunctional purine biosynthesis protein PurH from Clostridium kluyveri (strain NBRC 12016).